A 157-amino-acid chain; its full sequence is Protein Smg (157 aa).

This sequence belongs to the Smg family.

The protein is Protein Smg of Enterobacter sp. (strain 638).